We begin with the raw amino-acid sequence, 122 residues long: Large ribosomal subunit protein bL12 (122 aa).

This sequence belongs to the bacterial ribosomal protein bL12 family. As to quaternary structure, homodimer. Part of the ribosomal stalk of the 50S ribosomal subunit. Forms a multimeric L10(L12)X complex, where L10 forms an elongated spine to which 2 to 4 L12 dimers bind in a sequential fashion. Binds GTP-bound translation factors.

Forms part of the ribosomal stalk which helps the ribosome interact with GTP-bound translation factors. Is thus essential for accurate translation. This Vibrio vulnificus (strain CMCP6) protein is Large ribosomal subunit protein bL12.